Reading from the N-terminus, the 590-residue chain is Aspartate--tRNA(Asp/Asn) ligase (590 aa).

Glutamate 175 provides a ligand contact to L-aspartate. Residues 199–202 (QQYK) form an aspartate region. L-aspartate contacts are provided by arginine 221 and histidine 450. 221 to 223 (RDE) is a binding site for ATP. Glutamate 484 provides a ligand contact to ATP. Arginine 491 serves as a coordination point for L-aspartate. Residue 536 to 539 (GVDR) coordinates ATP.

This sequence belongs to the class-II aminoacyl-tRNA synthetase family. Type 1 subfamily. In terms of assembly, homodimer.

The protein resides in the cytoplasm. The enzyme catalyses tRNA(Asx) + L-aspartate + ATP = L-aspartyl-tRNA(Asx) + AMP + diphosphate. Functionally, aspartyl-tRNA synthetase with relaxed tRNA specificity since it is able to aspartylate not only its cognate tRNA(Asp) but also tRNA(Asn). Reaction proceeds in two steps: L-aspartate is first activated by ATP to form Asp-AMP and then transferred to the acceptor end of tRNA(Asp/Asn). This Bradyrhizobium sp. (strain ORS 278) protein is Aspartate--tRNA(Asp/Asn) ligase.